The sequence spans 407 residues: Ribosomal protein uL3-like (407 aa).

The span at 1–31 (MSHRKFSAPRHGHLGFLPHKRSHRHRGKVKT) shows a compositional bias: basic residues. 2 disordered regions span residues 1 to 35 (MSHRKFSAPRHGHLGFLPHKRSHRHRGKVKTWPRD) and 387 to 407 (AFMGPQKKHLEKETPETSGDL).

Belongs to the universal ribosomal protein uL3 family. Component of the large ribosomal subunit in striated muscle cells.

Its function is as follows. Heart- and skeletal muscle-specific component of the ribosome, which regulates muscle function. Component of the large ribosomal subunit in striated muscle cells: replaces the RPL3 paralog in the ribosome in these cells. The ribosome is a large ribonucleoprotein complex responsible for the synthesis of proteins in the cell. Inhibits myotube growth and muscle function. The sequence is that of Ribosomal protein uL3-like from Homo sapiens (Human).